We begin with the raw amino-acid sequence, 436 residues long: Protein translocase subunit SecY (436 aa).

10 helical membrane-spanning segments follow: residues 19-39 (ILFT…TVPG), 68-88 (FSVF…VQLL), 116-136 (YISL…FNAL), 151-171 (LFIG…GEQI), 179-199 (GVSM…VKGI), 216-236 (IIFV…TTYV), 269-289 (VIPV…LQFL), 313-333 (GIAM…FVQI), 372-392 (VGSL…DLFG), and 395-415 (DTVA…IEGM).

It belongs to the SecY/SEC61-alpha family. In terms of assembly, component of the Sec protein translocase complex. Heterotrimer consisting of SecY, SecE and SecG subunits. The heterotrimers can form oligomers, although 1 heterotrimer is thought to be able to translocate proteins. Interacts with the ribosome. Interacts with SecDF, and other proteins may be involved. Interacts with SecA.

It is found in the cell membrane. Its function is as follows. The central subunit of the protein translocation channel SecYEG. Consists of two halves formed by TMs 1-5 and 6-10. These two domains form a lateral gate at the front which open onto the bilayer between TMs 2 and 7, and are clamped together by SecE at the back. The channel is closed by both a pore ring composed of hydrophobic SecY resides and a short helix (helix 2A) on the extracellular side of the membrane which forms a plug. The plug probably moves laterally to allow the channel to open. The ring and the pore may move independently. This chain is Protein translocase subunit SecY, found in Streptococcus gordonii (strain Challis / ATCC 35105 / BCRC 15272 / CH1 / DL1 / V288).